The chain runs to 217 residues: Cytochrome c biogenesis ATP-binding export protein CcmA (217 aa).

One can recognise an ABC transporter domain in the interval 6–216; sequence LQLEQLACQR…QYKFFDQGNM (211 aa). 38-45 is an ATP binding site; sequence GHNGIGKT.

This sequence belongs to the ABC transporter superfamily. CcmA exporter (TC 3.A.1.107) family. In terms of assembly, the complex is composed of two ATP-binding proteins (CcmA) and two transmembrane proteins (CcmB).

The protein localises to the cell inner membrane. It carries out the reaction heme b(in) + ATP + H2O = heme b(out) + ADP + phosphate + H(+). Part of the ABC transporter complex CcmAB involved in the biogenesis of c-type cytochromes; once thought to export heme, this seems not to be the case, but its exact role is uncertain. Responsible for energy coupling to the transport system. The polypeptide is Cytochrome c biogenesis ATP-binding export protein CcmA (Histophilus somni (strain 129Pt) (Haemophilus somnus)).